Here is a 238-residue protein sequence, read N- to C-terminus: Ubiquinone biosynthesis O-methyltransferase (238 aa).

Residues Arg39, Gly59, Asp80, and Met124 each contribute to the S-adenosyl-L-methionine site.

This sequence belongs to the methyltransferase superfamily. UbiG/COQ3 family.

It catalyses the reaction a 3-demethylubiquinol + S-adenosyl-L-methionine = a ubiquinol + S-adenosyl-L-homocysteine + H(+). The catalysed reaction is a 3-(all-trans-polyprenyl)benzene-1,2-diol + S-adenosyl-L-methionine = a 2-methoxy-6-(all-trans-polyprenyl)phenol + S-adenosyl-L-homocysteine + H(+). Its pathway is cofactor biosynthesis; ubiquinone biosynthesis. In terms of biological role, O-methyltransferase that catalyzes the 2 O-methylation steps in the ubiquinone biosynthetic pathway. The protein is Ubiquinone biosynthesis O-methyltransferase of Aeromonas salmonicida (strain A449).